A 428-amino-acid polypeptide reads, in one-letter code: Divergent protein kinase domain 1A (428 aa).

The Cytoplasmic segment spans residues 1-27 (MARSLCPGAWLRKPYYLQARFSYVRMK). Residues 28-48 (YLFFSWLVVFVGSWIIYVQYS) form a helical membrane-spanning segment. The Lumenal portion of the chain corresponds to 49–428 (TYTELCRGKD…WKKISYTNDS (380 aa)).

Belongs to the DIPK family. Post-translationally, among the many cysteines in the lumenal domain, most are probably involved in disulfide bonds.

Its subcellular location is the endoplasmic reticulum membrane. This Homo sapiens (Human) protein is Divergent protein kinase domain 1A.